The sequence spans 144 residues: Large ribosomal subunit protein uL14 (144 aa).

This sequence belongs to the universal ribosomal protein uL14 family. As to quaternary structure, part of the 50S ribosomal subunit. Forms a cluster with proteins L3 and L24e, part of which may contact the 16S rRNA in 2 intersubunit bridges.

Binds to 23S rRNA. Forms part of two intersubunit bridges in the 70S ribosome. The polypeptide is Large ribosomal subunit protein uL14 (Pyrobaculum islandicum (strain DSM 4184 / JCM 9189 / GEO3)).